Consider the following 48-residue polypeptide: Large ribosomal subunit protein bL33A (48 aa).

The protein belongs to the bacterial ribosomal protein bL33 family.

In Exiguobacterium sibiricum (strain DSM 17290 / CCUG 55495 / CIP 109462 / JCM 13490 / 255-15), this protein is Large ribosomal subunit protein bL33A.